Consider the following 663-residue polypeptide: Probable acetolactate synthase 2, chloroplastic (663 aa).

The span at 1 to 26 shows a compositional bias: low complexity; the sequence is MAAAAAAASLSVSDAAAKLPKPGGQV. A disordered region spans residues 1–56; sequence MAAAAAAASLSVSDAAAKLPKPGGQVQRRRDRDRPRVDAAACTRDSRRPTRERCST. The transit peptide at 1–79 directs the protein to the chloroplast; the sequence is MAAAAAAASL…TPVRAPVRTR (79 aa). 2 stretches are compositionally biased toward basic and acidic residues: residues 28 to 37 and 44 to 54; these read RRRDRDRPRV and RDSRRPTRERC. Glutamate 132 provides a ligand contact to thiamine diphosphate. A disulfide bridge links cysteine 152 with cysteine 298. FAD-binding positions include arginine 234, 340–361, and 383–402; these read HGTV…LGVR and DIDP…ICAD. The interval 478 to 558 is thiamine pyrophosphate binding; it reads QHQMWATQHY…VKVMVLNNQH (81 aa). Mg(2+) is bound by residues aspartate 529 and asparagine 556.

The protein belongs to the TPP enzyme family. Mg(2+) is required as a cofactor. It depends on thiamine diphosphate as a cofactor.

It localises to the plastid. The protein resides in the chloroplast. The catalysed reaction is 2 pyruvate + H(+) = (2S)-2-acetolactate + CO2. Its pathway is amino-acid biosynthesis; L-isoleucine biosynthesis; L-isoleucine from 2-oxobutanoate: step 1/4. The protein operates within amino-acid biosynthesis; L-valine biosynthesis; L-valine from pyruvate: step 1/4. This Oryza sativa subsp. japonica (Rice) protein is Probable acetolactate synthase 2, chloroplastic (ALS2).